Reading from the N-terminus, the 38-residue chain is Large ribosomal subunit protein bL36 (38 aa).

It belongs to the bacterial ribosomal protein bL36 family.

This chain is Large ribosomal subunit protein bL36, found in Amoebophilus asiaticus (strain 5a2).